Here is a 113-residue protein sequence, read N- to C-terminus: Probable mesentericin-Y105 immunity protein (113 aa).

This sequence belongs to the immunity protein EntA family.

Its function is as follows. Imparts immunity to mesentericin-Y105 to naturally sensitive host strains. This Leuconostoc mesenteroides protein is Probable mesentericin-Y105 immunity protein (mesI).